The sequence spans 216 residues: ATP-dependent Clp protease proteolytic subunit (216 aa).

Catalysis depends on Ser-101, which acts as the Nucleophile. His-126 is a catalytic residue.

The protein belongs to the peptidase S14 family. In terms of assembly, component of the chloroplastic Clp protease core complex.

It is found in the plastid. The protein localises to the chloroplast stroma. The catalysed reaction is Hydrolysis of proteins to small peptides in the presence of ATP and magnesium. alpha-casein is the usual test substrate. In the absence of ATP, only oligopeptides shorter than five residues are hydrolyzed (such as succinyl-Leu-Tyr-|-NHMec, and Leu-Tyr-Leu-|-Tyr-Trp, in which cleavage of the -Tyr-|-Leu- and -Tyr-|-Trp bonds also occurs).. Its function is as follows. Cleaves peptides in various proteins in a process that requires ATP hydrolysis. Has a chymotrypsin-like activity. Plays a major role in the degradation of misfolded proteins. This is ATP-dependent Clp protease proteolytic subunit from Zea mays (Maize).